Consider the following 425-residue polypeptide: Serine--tRNA ligase (425 aa).

230–232 (TAE) is a binding site for L-serine. An ATP-binding site is contributed by 261–263 (RSE). An L-serine-binding site is contributed by glutamate 284. 348–351 (EISS) is an ATP binding site. An L-serine-binding site is contributed by serine 384.

Belongs to the class-II aminoacyl-tRNA synthetase family. Type-1 seryl-tRNA synthetase subfamily. In terms of assembly, homodimer. The tRNA molecule binds across the dimer.

It localises to the cytoplasm. The enzyme catalyses tRNA(Ser) + L-serine + ATP = L-seryl-tRNA(Ser) + AMP + diphosphate + H(+). It catalyses the reaction tRNA(Sec) + L-serine + ATP = L-seryl-tRNA(Sec) + AMP + diphosphate + H(+). Its pathway is aminoacyl-tRNA biosynthesis; selenocysteinyl-tRNA(Sec) biosynthesis; L-seryl-tRNA(Sec) from L-serine and tRNA(Sec): step 1/1. In terms of biological role, catalyzes the attachment of serine to tRNA(Ser). Is also able to aminoacylate tRNA(Sec) with serine, to form the misacylated tRNA L-seryl-tRNA(Sec), which will be further converted into selenocysteinyl-tRNA(Sec). The polypeptide is Serine--tRNA ligase (Streptococcus pyogenes serotype M12 (strain MGAS2096)).